A 254-amino-acid polypeptide reads, in one-letter code: uncharacterized protein (254 aa).

This is an uncharacterized protein from Acidianus filamentous virus 2 (isolate Italy/Pozzuoli) (AFV-2).